The sequence spans 230 residues: MVKLVFARHGESEWNKANLFTGWADVDLSEKGTQQAIDAGKLIKEAGIEFDQAYTSVLKRAIKTTNLALEASDQLWVPVEKSWRLNERHYGGLTGKNKAEAAEQFGDEQVHIWRRSYDVLPPNMDRDDEHSAHTDRRYASLDDSVIPDAENLKVTLERALPFWEDKIAPALKDGKNVFVGAHGNSIRALVKHIKQLSDDEIMDVEIPNFPPLVFEFDEKLNVVKEYYLGK.

Substrate contacts are provided by residues 8–15 (RHGESEWN), 21–22 (TG), Arg-60, 87–90 (ERHY), Lys-98, 114–115 (RR), and 183–184 (GN). The active-site Tele-phosphohistidine intermediate is His-9. Glu-87 acts as the Proton donor/acceptor in catalysis.

The protein belongs to the phosphoglycerate mutase family. BPG-dependent PGAM subfamily.

The catalysed reaction is (2R)-2-phosphoglycerate = (2R)-3-phosphoglycerate. It functions in the pathway carbohydrate degradation; glycolysis; pyruvate from D-glyceraldehyde 3-phosphate: step 3/5. Catalyzes the interconversion of 2-phosphoglycerate and 3-phosphoglycerate. This Streptococcus sanguinis (strain SK36) protein is 2,3-bisphosphoglycerate-dependent phosphoglycerate mutase.